The chain runs to 60 residues: Small, acid-soluble spore protein H 2 (60 aa).

Positions 38 to 60 (TIHPLDNPSQKQSVPVASLEEHS) are disordered.

Belongs to the SspH family.

It localises to the spore core. The sequence is that of Small, acid-soluble spore protein H 2 from Geobacillus thermodenitrificans (strain NG80-2).